A 313-amino-acid polypeptide reads, in one-letter code: Porphobilinogen deaminase (313 aa).

Cysteine 241 is modified (S-(dipyrrolylmethanemethyl)cysteine).

The protein belongs to the HMBS family. As to quaternary structure, monomer. The cofactor is dipyrromethane.

It catalyses the reaction 4 porphobilinogen + H2O = hydroxymethylbilane + 4 NH4(+). It participates in porphyrin-containing compound metabolism; protoporphyrin-IX biosynthesis; coproporphyrinogen-III from 5-aminolevulinate: step 2/4. Functionally, tetrapolymerization of the monopyrrole PBG into the hydroxymethylbilane pre-uroporphyrinogen in several discrete steps. The chain is Porphobilinogen deaminase from Bacillus velezensis (strain DSM 23117 / BGSC 10A6 / LMG 26770 / FZB42) (Bacillus amyloliquefaciens subsp. plantarum).